The sequence spans 302 residues: Putative thiol protease R355 (302 aa).

Residues His-182 and Asp-199 contribute to the active site. Catalysis depends on Cys-244, which acts as the Nucleophile.

It belongs to the peptidase C48 family.

Its subcellular location is the virion. The protein is Putative thiol protease R355 of Acanthamoeba polyphaga mimivirus (APMV).